A 41-amino-acid chain; its full sequence is Large ribosomal subunit protein bL36 (41 aa).

This sequence belongs to the bacterial ribosomal protein bL36 family.

This is Large ribosomal subunit protein bL36 from Neisseria gonorrhoeae (strain ATCC 700825 / FA 1090).